Reading from the N-terminus, the 285-residue chain is Pantothenate synthetase (285 aa).

Met-30–His-37 lines the ATP pocket. His-37 functions as the Proton donor in the catalytic mechanism. A (R)-pantoate-binding site is contributed by Gln-61. Gln-61 is a beta-alanine binding site. An ATP-binding site is contributed by Gly-149–Asp-152. Residue Gln-155 participates in (R)-pantoate binding. Residues Ile-178 and Leu-186 to Arg-189 each bind ATP.

It belongs to the pantothenate synthetase family. In terms of assembly, homodimer.

The protein resides in the cytoplasm. The enzyme catalyses (R)-pantoate + beta-alanine + ATP = (R)-pantothenate + AMP + diphosphate + H(+). It participates in cofactor biosynthesis; (R)-pantothenate biosynthesis; (R)-pantothenate from (R)-pantoate and beta-alanine: step 1/1. Functionally, catalyzes the condensation of pantoate with beta-alanine in an ATP-dependent reaction via a pantoyl-adenylate intermediate. The polypeptide is Pantothenate synthetase (Buchnera aphidicola subsp. Acyrthosiphon pisum (strain 5A)).